A 157-amino-acid polypeptide reads, in one-letter code: MRKVKPARKLGRTSAHRKATLSNLSTQLLIHKRIETTEAKAKETRKVVEKIITKARKGTHHAQREVFGALRDKEAVRELFEEIVGRIGSRNGGYTRIIKLAPRYGDAAKMAVIELVDYAEAPSAAPVVSKQDRAKRVKGSKKAESRSQENEGGDAAE.

Residues 124-157 are disordered; it reads AAPVVSKQDRAKRVKGSKKAESRSQENEGGDAAE.

Belongs to the bacterial ribosomal protein bL17 family. In terms of assembly, part of the 50S ribosomal subunit. Contacts protein L32.

This chain is Large ribosomal subunit protein bL17, found in Chlorobaculum tepidum (strain ATCC 49652 / DSM 12025 / NBRC 103806 / TLS) (Chlorobium tepidum).